A 630-amino-acid polypeptide reads, in one-letter code: Zinc finger protein 37 homolog (630 aa).

Disordered regions lie at residues 1-45 (MSVS…SAAE), 77-172 (KPDM…PSKK), and 193-285 (HSRN…KHEK). Over residues 14-30 (ETVDRRRSAETTKEAGR) the composition is skewed to basic and acidic residues. Residues 32 to 103 (LEMAVSEPEA…KGKRPSQGCP (72 aa)) form the KRAB domain. Position 42 is a phosphoserine (S42). Positions 110-122 (KQKETDGKVQKDD) are enriched in basic and acidic residues. Residues 161–172 (NNLHKKHVPSKK) are compositionally biased toward basic residues. The segment covering 193–206 (HSRNCVKRKSDAAK) has biased composition (basic and acidic residues). Basic residues predominate over residues 221 to 231 (KGKKQTGKKHE). Basic and acidic residues-rich tracts occupy residues 232 to 243 (KLSSHSSSDKCN) and 260 to 274 (IKQDKIQTGEKHEKS). C2H2-type zinc fingers lie at residues 293 to 315 (YECNQCGKVLSHKQGLIDHQRVH) and 321 to 343 (YECNECGIAFSQKSHLVVHQRTH). The C2H2-type 3; atypical zinc-finger motif lies at 349–367 (YECIQCGKAHGHKHALTDH). 9 C2H2-type zinc fingers span residues 377–399 (YECAECGKTFRHSSNLIQHVRSH), 405–427 (YECKECGKSFRYNSSLTEHVRTH), 433–455 (YECNECGKAFKYSSSLTKHMRIH), 461–483 (FECNECGKAFSKKSHLIIHQRTH), 489–511 (YKCNECGKAFGHSSSLTYHMRTH), 517–539 (FECNQCGKGFKQIEGLTQHQRVH), 545–567 (YECNECGKAFSQKSHLIVHQRTH), 573–595 (YECNECEKAFNAKSQLVIHQRSH), and 601–623 (YECNECGKTFKQNASLTKHVKTH).

The protein belongs to the krueppel C2H2-type zinc-finger protein family. As to expression, expressed at low level in several tissues including fetal cartilage.

The protein resides in the nucleus. Functionally, may be involved in transcriptional regulation. This Homo sapiens (Human) protein is Zinc finger protein 37 homolog (ZFP37).